A 694-amino-acid polypeptide reads, in one-letter code: Phosphatase and actin regulator 4-A (694 aa).

Composition is skewed to basic and acidic residues over residues 1–13 (MEDRSEEGGDHSE) and 46–72 (SSDSFRETSEVLERKISTRKPREELIK). Disordered regions lie at residues 1–29 (MEDRSEEGGDHSEMPSAPSTPPSKRKSKF), 42–169 (RKRK…QPLP), 192–403 (VNEV…HIRI), 426–445 (LFMQNDMGPSEEGTRVRSLP), and 450–572 (LLKV…QIRQ). The stretch at 55-80 (EVLERKISTRKPREELIKRGLLVEVP) is one RPEL 1 repeat. Positions 240–267 (SISTSVTQESAVAGQKSDSSNRLQSSAP) are enriched in polar residues. A compositionally biased stretch (low complexity) spans 300 to 317 (AELSLALAGSPLSPAGSR). Pro residues-rich tracts occupy residues 318–327 (PSPPLPPKRA) and 372–381 (SNPPVPPLTL). Acidic residues-rich tracts occupy residues 455–467 (DDEDDESLEDESL), 499–511 (QEEEEGGVSDTDS), and 519–529 (DDEEEEEEEET). RPEL repeat units follow at residues 576–601 (TQLNRRLSQRPTAEELEQRNILQKNE) and 613–638 (RRLTRKLSQRPTVAELVERKILRFNE).

This sequence belongs to the phosphatase and actin regulator family. Binds ppp1ca and actin.

It is found in the cytoplasm. It localises to the cell projection. The protein resides in the lamellipodium. Regulator of protein phosphatase 1 (PP1) required for neural tube and optic fissure closure, and enteric neural crest cell (ENCCs) migration during development. Acts as an activator of PP1. During neural tube closure, localizes to the ventral neural tube and activates PP1, leading to down-regulate cell proliferation within cranial neural tissue and the neural retina. Also acts as a regulator of migration of enteric neural crest cells (ENCCs) by activating PP1, leading to repression of the integrin signaling through the rho/rock pathway. The sequence is that of Phosphatase and actin regulator 4-A (phactr4-a) from Xenopus laevis (African clawed frog).